Consider the following 3291-residue polypeptide: Protocadherin-16 (3291 aa).

Residues 1–35 form the signal peptide; the sequence is MQKELSVALSCPGMKSLRTLLPLLVLLGATVPGSW. Residues 36–2933 are Extracellular-facing; sequence GQAGSLDLQI…PDLNLLLVGA (2898 aa). Cadherin domains follow at residues 37–137, 138–249, 250–356, 369–466, 476–572, 573–679, 680–784, 785–888, 889–994, 995–1105, 1100–1205, 1218–1317, 1326–1429, 1430–1539, 1539–1642, 1643–1744, 1745–1848, 1849–1953, 1976–2061, 2062–2164, 2165–2270, 2270–2369, 2370–2475, 2476–2595, 2596–2699, 2700–2806, and 2807–2926; these read QAGS…APAF, PQAR…APAF, NQSR…QPSM, VSEA…APAF, LPEV…EPQF, QRTF…PPQF, YPRE…PPIF, EQLQ…SPAF, PAPE…APRF, DSPT…EPTF, SEEP…SPTF, IQVP…SPDL, VPVV…APTF, ARDP…APVF, FASP…APAF, PQQE…TPTF, GNTH…APVF, PVPS…APAF, LATL…GPRF, PRTS…APRF, LRPH…RPTI, IPQP…VPTF, SQSL…APSF, TLPH…PPVF, TRAS…GPAF, PLSL…DPVF, and LAPS…APDL. N-linked (GlcNAc...) asparagine glycosylation is present at Asn396. Asn2354 carries an N-linked (GlcNAc...) asparagine glycan. The tract at residues 2867 to 2886 is disordered; the sequence is SRAPGSGTTTSGGGGRTRRE. Residues 2934-2954 traverse the membrane as a helical segment; that stretch reads VAASLGVVVVLALAALVLGLV. Residues 2955–3291 are Cytoplasmic-facing; it reads RARSRKAEAA…EPPDDTELRI (337 aa). A disordered region spans residues 2978 to 3033; that stretch reads SLQKLGREPPSPPPSEHLYHQTLPSYGGPGAGGPYPRGGSLDPSHSSGRGSAEAAE. Residues 3004–3013 are compositionally biased toward gly residues; the sequence is GGPGAGGPYP. Phosphoserine is present on Ser3048. 2 disordered regions span residues 3051-3081 and 3226-3291; these read SSLA…APDT and ASHR…ELRI. Residues 3237–3259 are compositionally biased toward low complexity; it reads SLSSAAMSPSFSPSLSPLAARSP. The segment covering 3270–3279 has biased composition (polar residues); it reads PSASALSTES.

Heterophilic interaction with FAT4; this interaction affects their respective protein levels. As to expression, expressed in the epicardium and atrioventricular sulcus (at protein level).

It is found in the cell membrane. Calcium-dependent cell-adhesion protein. Mediates functions in neuroprogenitor cell proliferation and differentiation. In the heart, has a critical role for proper morphogenesis of the mitral valve, acting in the regulation of cell migration involved in valve formation. The protein is Protocadherin-16 (Dchs1) of Mus musculus (Mouse).